The following is a 182-amino-acid chain: UPF0301 protein NMB1336 (182 aa).

This sequence belongs to the UPF0301 (AlgH) family.

The protein is UPF0301 protein NMB1336 of Neisseria meningitidis serogroup B (strain ATCC BAA-335 / MC58).